Here is a 250-residue protein sequence, read N- to C-terminus: Large ribosomal subunit protein uL30 (250 aa).

The protein belongs to the universal ribosomal protein uL30 family.

This chain is Large ribosomal subunit protein uL30 (RPL7), found in Yarrowia lipolytica (strain CLIB 122 / E 150) (Yeast).